Reading from the N-terminus, the 59-residue chain is Large ribosomal subunit protein uL30 (59 aa).

Belongs to the universal ribosomal protein uL30 family. In terms of assembly, part of the 50S ribosomal subunit.

This Solidesulfovibrio magneticus (strain ATCC 700980 / DSM 13731 / RS-1) (Desulfovibrio magneticus) protein is Large ribosomal subunit protein uL30.